We begin with the raw amino-acid sequence, 333 residues long: 4-hydroxythreonine-4-phosphate dehydrogenase (333 aa).

Substrate contacts are provided by His-133 and Thr-134. 3 residues coordinate a divalent metal cation: His-169, His-214, and His-269. Positions 277, 286, and 295 each coordinate substrate.

This sequence belongs to the PdxA family. Homodimer. Requires Zn(2+) as cofactor. The cofactor is Mg(2+). Co(2+) is required as a cofactor.

Its subcellular location is the cytoplasm. The catalysed reaction is 4-(phosphooxy)-L-threonine + NAD(+) = 3-amino-2-oxopropyl phosphate + CO2 + NADH. It functions in the pathway cofactor biosynthesis; pyridoxine 5'-phosphate biosynthesis; pyridoxine 5'-phosphate from D-erythrose 4-phosphate: step 4/5. Its function is as follows. Catalyzes the NAD(P)-dependent oxidation of 4-(phosphooxy)-L-threonine (HTP) into 2-amino-3-oxo-4-(phosphooxy)butyric acid which spontaneously decarboxylates to form 3-amino-2-oxopropyl phosphate (AHAP). In Caulobacter vibrioides (strain ATCC 19089 / CIP 103742 / CB 15) (Caulobacter crescentus), this protein is 4-hydroxythreonine-4-phosphate dehydrogenase.